An 88-amino-acid polypeptide reads, in one-letter code: Alpha-conotoxin GVIIIB (88 aa).

A signal peptide spans 1–20 (MMSKMGAMFVLLLLFTLASS). Positions 21 to 43 (QQEGDVQARKTRPKSDFYRALPR) are excised as a propeptide. The residue at position 87 (threonine 87) is a Threonine amide.

Belongs to the conotoxin S superfamily. Post-translationally, contains 5 disulfide bonds. The predominant peptide contains 2 hydroxyprolines, while 2 minor peptides contains 1 and 3 hydroxyprolines. In terms of tissue distribution, expressed by the venom duct.

The protein localises to the secreted. Functionally, alpha-conotoxins act on postsynaptic membranes, they bind to the nicotinic acetylcholine receptors (nAChR) and thus inhibit them. This toxin shows high activity on alpha-9-alpha-10 (CHRNA9-CHRNA10) (IC(50)=9.79 nM). It also shows weak activity on alpha-3-beta-2 (CHRNA3-CHRNB2) (IC(50)~1 uM), alpha-6/alpha-3-beta-2-beta-3 (CHRNA6/CHRNA3-CHRNB2-CHRNB3) (IC(50)~1 uM). The toxin binds to the same or overlapping binding sites than conotoxin RgIA (AC P0C1D0). This chain is Alpha-conotoxin GVIIIB, found in Conus geographus (Geography cone).